Reading from the N-terminus, the 343-residue chain is MNATPKQKKLISLSQFILEEQLKIPHASGEFSALLSHLVYAAKIVGREVRKAGLLDDILGATEDTNVQGETQMKLDQYADNAFNQSLKICGHLCVLASEEHEDIIPIPGGYNIGKYTMAIDPLDGSSNIDTNVSIGTIFSIHQRLEPNSKEPGNERDLLQKGHLQRCAGYIIYGSSTMLVLSTGKGVSGFTLDPSVGEFLLSHPNMQMPESGDIYSANEGNASYWSPEVQAYLQKIKSIEGGKKPKTARYIGSLVADFHRNLLKGGIFLYPNDTKSSKYPNGKLRLLYEAAPMAFIAEQAGGMAVTVKGERILDLTPKDLHERTTLIIGSKKEVEEFLTFVAK.

Residues Glu-99, Asp-121, Leu-123, and Asp-124 each coordinate Mg(2+). Residues 124 to 127, Asn-218, Tyr-250, and Lys-283 each bind substrate; that span reads DGSS. Residue Glu-289 participates in Mg(2+) binding.

The protein belongs to the FBPase class 1 family. As to quaternary structure, homotetramer. It depends on Mg(2+) as a cofactor.

It localises to the cytoplasm. It carries out the reaction beta-D-fructose 1,6-bisphosphate + H2O = beta-D-fructose 6-phosphate + phosphate. The protein operates within carbohydrate biosynthesis; gluconeogenesis. This is Fructose-1,6-bisphosphatase class 1 from Leptospira biflexa serovar Patoc (strain Patoc 1 / Ames).